Here is a 124-residue protein sequence, read N- to C-terminus: Small ribosomal subunit protein uS13 (124 aa).

Residues 89–124 are disordered; sequence GRRHRQGLPVRGQRTKTNARTRKGPKRTVAGKKKAK. Residues 101–124 are compositionally biased toward basic residues; the sequence is QRTKTNARTRKGPKRTVAGKKKAK.

Belongs to the universal ribosomal protein uS13 family. Part of the 30S ribosomal subunit. Forms a loose heterodimer with protein S19. Forms two bridges to the 50S subunit in the 70S ribosome.

Functionally, located at the top of the head of the 30S subunit, it contacts several helices of the 16S rRNA. In the 70S ribosome it contacts the 23S rRNA (bridge B1a) and protein L5 of the 50S subunit (bridge B1b), connecting the 2 subunits; these bridges are implicated in subunit movement. Contacts the tRNAs in the A and P-sites. This Nocardioides sp. (strain ATCC BAA-499 / JS614) protein is Small ribosomal subunit protein uS13.